A 385-amino-acid chain; its full sequence is Elongation factor Ts, mitochondrial (385 aa).

Residues methionine 1–phenylalanine 50 constitute a mitochondrion transit peptide.

This sequence belongs to the EF-Ts family.

The protein resides in the mitochondrion. In terms of biological role, associates with the EF-Tu.GDP complex and induces the exchange of GDP to GTP. It remains bound to the aminoacyl-tRNA.EF-Tu.GTP complex up to the GTP hydrolysis stage on the ribosome. The chain is Elongation factor Ts, mitochondrial from Oryza sativa subsp. indica (Rice).